We begin with the raw amino-acid sequence, 120 residues long: U-scoloptoxin(16)-Er2a (120 aa).

Positions 1 to 26 (MNTVSVVQFLAVGCAVFVLYGRGVFA) are cleaved as a signal peptide.

The protein belongs to the scoloptoxin-16 family. Post-translationally, contains 4 disulfide bonds. In terms of tissue distribution, expressed by the venom gland.

The protein resides in the secreted. The sequence is that of U-scoloptoxin(16)-Er2a from Ethmostigmus rubripes (Giant centipede).